We begin with the raw amino-acid sequence, 529 residues long: Bifunctional purine biosynthesis protein PurH (529 aa).

Positions 1 to 148 constitute an MGS-like domain; sequence MQQRRPVRRA…KNHKDVAIVV (148 aa).

Belongs to the PurH family.

It carries out the reaction (6R)-10-formyltetrahydrofolate + 5-amino-1-(5-phospho-beta-D-ribosyl)imidazole-4-carboxamide = 5-formamido-1-(5-phospho-D-ribosyl)imidazole-4-carboxamide + (6S)-5,6,7,8-tetrahydrofolate. It catalyses the reaction IMP + H2O = 5-formamido-1-(5-phospho-D-ribosyl)imidazole-4-carboxamide. It functions in the pathway purine metabolism; IMP biosynthesis via de novo pathway; 5-formamido-1-(5-phospho-D-ribosyl)imidazole-4-carboxamide from 5-amino-1-(5-phospho-D-ribosyl)imidazole-4-carboxamide (10-formyl THF route): step 1/1. It participates in purine metabolism; IMP biosynthesis via de novo pathway; IMP from 5-formamido-1-(5-phospho-D-ribosyl)imidazole-4-carboxamide: step 1/1. This is Bifunctional purine biosynthesis protein PurH from Salmonella enteritidis PT4 (strain P125109).